The chain runs to 141 residues: Nucleoside diphosphate kinase (141 aa).

Residues lysine 11, phenylalanine 59, arginine 87, threonine 93, arginine 104, and asparagine 114 each coordinate ATP. Residue histidine 117 is the Pros-phosphohistidine intermediate of the active site.

This sequence belongs to the NDK family. As to quaternary structure, homotetramer. Requires Mg(2+) as cofactor.

The protein localises to the cytoplasm. It carries out the reaction a 2'-deoxyribonucleoside 5'-diphosphate + ATP = a 2'-deoxyribonucleoside 5'-triphosphate + ADP. It catalyses the reaction a ribonucleoside 5'-diphosphate + ATP = a ribonucleoside 5'-triphosphate + ADP. Major role in the synthesis of nucleoside triphosphates other than ATP. The ATP gamma phosphate is transferred to the NDP beta phosphate via a ping-pong mechanism, using a phosphorylated active-site intermediate. The polypeptide is Nucleoside diphosphate kinase (Histophilus somni (strain 129Pt) (Haemophilus somnus)).